The sequence spans 450 residues: Phosphoglucosamine mutase (450 aa).

Ser102 serves as the catalytic Phosphoserine intermediate. Ser102, Asp244, Asp246, and Asp248 together coordinate Mg(2+). At Ser102 the chain carries Phosphoserine.

The protein belongs to the phosphohexose mutase family. Mg(2+) is required as a cofactor. In terms of processing, activated by phosphorylation.

It catalyses the reaction alpha-D-glucosamine 1-phosphate = D-glucosamine 6-phosphate. Its function is as follows. Catalyzes the conversion of glucosamine-6-phosphate to glucosamine-1-phosphate. The protein is Phosphoglucosamine mutase of Bartonella bacilliformis (strain ATCC 35685 / KC583 / Herrer 020/F12,63).